The primary structure comprises 663 residues: Transketolase 1 (663 aa).

Substrate is bound at residue His26. Lys46 is subject to N6-acetyllysine. Thiamine diphosphate-binding positions include His66 and Gly114 to Leu116. Asp155 serves as a coordination point for Mg(2+). Gly156 and Asn185 together coordinate thiamine diphosphate. Residues Asn185 and Ile187 each contribute to the Mg(2+) site. The substrate site is built by His261, Arg358, and Ser385. His261 contributes to the thiamine diphosphate binding site. The active-site Proton donor is the Glu411. Position 437 (Phe437) interacts with thiamine diphosphate. Substrate contacts are provided by His461, Asp469, His473, and Arg520.

Belongs to the transketolase family. As to quaternary structure, homodimer. The cofactor is Mg(2+). Ca(2+) serves as cofactor. Requires Mn(2+) as cofactor. It depends on Co(2+) as a cofactor. Thiamine diphosphate is required as a cofactor.

It catalyses the reaction D-sedoheptulose 7-phosphate + D-glyceraldehyde 3-phosphate = aldehydo-D-ribose 5-phosphate + D-xylulose 5-phosphate. In terms of biological role, catalyzes the transfer of a two-carbon ketol group from a ketose donor to an aldose acceptor, via a covalent intermediate with the cofactor thiamine pyrophosphate. Thus, catalyzes the reversible transfer of a two-carbon ketol group from sedoheptulose-7-phosphate to glyceraldehyde-3-phosphate, producing xylulose-5-phosphate and ribose-5-phosphate. In Escherichia coli (strain K12), this protein is Transketolase 1 (tktA).